A 487-amino-acid polypeptide reads, in one-letter code: MKETLIFDLSRKGRQGHRIASLDIEPQPAINLIPEKFLRTEPADLPEVPESEVVRHFIRLSNLNHHVDKDMYPLGSCTMKYNPKINDQTADIAGFTSIHPLQPAETAQGTLQLMYELGEMLREIAGMAAITLQPAAGAHGELTGILMIRKYHDSRASKRTKLLVVDSAHGTNPASAALVGYDILSVKSNAEGRTDIEDLKAKLDENVAALMLTNPNTIGLFEKDIKEIEQLVHDNGSLLYMDGANMNALMGITRPGDMGFDIVHYNLHKTFSAPHGGGGPGSGPVGVCDKLKPYLPVPVIEKHDDGNTSRYTLTTDRPLSIGRMMNFYGNFSVMVRAYTYIRMLGAEGIRRVSENAIINANYLLSKLIDRYDLPYPKPVMHEFCLSGDRQKKQHNVRTLDIAKRLLDLGFHAPTIYFPLIVSEALMIEPTETETRETLDRFAEAMLQIADETENSPETVQNAPQFTPVKRLDEAQASRKLNICCPGC.

Residue K269 is modified to N6-(pyridoxal phosphate)lysine.

Belongs to the GcvP family. C-terminal subunit subfamily. As to quaternary structure, the glycine cleavage system is composed of four proteins: P, T, L and H. In this organism, the P 'protein' is a heterodimer of two subunits. It depends on pyridoxal 5'-phosphate as a cofactor.

It catalyses the reaction N(6)-[(R)-lipoyl]-L-lysyl-[glycine-cleavage complex H protein] + glycine + H(+) = N(6)-[(R)-S(8)-aminomethyldihydrolipoyl]-L-lysyl-[glycine-cleavage complex H protein] + CO2. In terms of biological role, the glycine cleavage system catalyzes the degradation of glycine. The P protein binds the alpha-amino group of glycine through its pyridoxal phosphate cofactor; CO(2) is released and the remaining methylamine moiety is then transferred to the lipoamide cofactor of the H protein. In Prosthecochloris aestuarii (strain DSM 271 / SK 413), this protein is Probable glycine dehydrogenase (decarboxylating) subunit 2.